We begin with the raw amino-acid sequence, 46 residues long: MNNWWVYPCFEIDVVASGFDLPVAIAFPSEQRKGKNDVVELYGKVK.

This is an uncharacterized protein from Archaeoglobus fulgidus (strain ATCC 49558 / DSM 4304 / JCM 9628 / NBRC 100126 / VC-16).